We begin with the raw amino-acid sequence, 108 residues long: uncharacterized protein (108 aa).

The next 2 helical transmembrane spans lie at 51–71 and 86–106; these read VFAA…FCFL and PLST…KSLL.

It is found in the membrane. This is an uncharacterized protein from Saccharomyces cerevisiae (strain ATCC 204508 / S288c) (Baker's yeast).